Consider the following 500-residue polypeptide: NAD(P)H-quinone oxidoreductase subunit 2 B, chloroplastic (500 aa).

13 helical membrane-spanning segments follow: residues 14 to 34, 41 to 61, 78 to 98, 116 to 136, 166 to 186, 211 to 231, 242 to 262, 277 to 297, 305 to 325, 335 to 355, 376 to 396, 409 to 429, and 467 to 487; these read SILPECILISSLIIILLIDLT, WLYFISLTSLIISITVLLFQL, FNGIFRISIAFSSLLCIPLSM, LTATIGGMFLCGANDLIIIFI, LLMGGASSSILAYGFSWLYGL, ISIVLIFIIAGIAFKLSLVPF, APTSVIAFFSVTSKIAGLALA, WHLILEIIAILSMILGNFIAI, MLAYSSISQIGYFMIGVIAGD, YMLFYIFMNLGTFACITLFGL, ASFLALSLLSLGGIPPLAGFF, GLYLSVSVGLFTSVISIYYYL, and IIICVIGSTFSGIVINPVIAI.

The protein belongs to the complex I subunit 2 family. In terms of assembly, NDH is composed of at least 16 different subunits, 5 of which are encoded in the nucleus.

The protein resides in the plastid. It is found in the chloroplast thylakoid membrane. The catalysed reaction is a plastoquinone + NADH + (n+1) H(+)(in) = a plastoquinol + NAD(+) + n H(+)(out). It carries out the reaction a plastoquinone + NADPH + (n+1) H(+)(in) = a plastoquinol + NADP(+) + n H(+)(out). Functionally, NDH shuttles electrons from NAD(P)H:plastoquinone, via FMN and iron-sulfur (Fe-S) centers, to quinones in the photosynthetic chain and possibly in a chloroplast respiratory chain. The immediate electron acceptor for the enzyme in this species is believed to be plastoquinone. Couples the redox reaction to proton translocation, and thus conserves the redox energy in a proton gradient. The polypeptide is NAD(P)H-quinone oxidoreductase subunit 2 B, chloroplastic (Anthoceros angustus (Hornwort)).